Consider the following 107-residue polypeptide: Nucleoid-associated protein A1E_05550 (107 aa).

The protein belongs to the YbaB/EbfC family. In terms of assembly, homodimer.

The protein localises to the cytoplasm. It is found in the nucleoid. In terms of biological role, binds to DNA and alters its conformation. May be involved in regulation of gene expression, nucleoid organization and DNA protection. This chain is Nucleoid-associated protein A1E_05550, found in Rickettsia canadensis (strain McKiel).